The sequence spans 415 residues: Lupus La protein homolog (415 aa).

In terms of domain architecture, HTH La-type RNA-binding spans 7 to 99 (NEKMAALEAK…RRSPSRPLPE (93 aa)). Phosphoserine is present on residues S92 and S94. Residues 111–187 (RSVYIKGFPT…TNLLILFKED (77 aa)) enclose the RRM domain. Position 116 is an N6-acetyllysine (K116). The residue at position 120 (T120) is a Phosphothreonine. N6-acetyllysine occurs at positions 128 and 327. The xRRM domain occupies 226 to 343 (EGKMGCLLKF…HAARRFKGSH (118 aa)). The disordered stretch occupies residues 323 to 415 (ESLNKWKSKG…KKRENGARDK (93 aa)). The span at 328–341 (WKSKGGHAARRFKG) shows a compositional bias: basic residues. N6-acetyllysine is present on K356. The residue at position 377 (T377) is a Phosphothreonine. Residues 377-415 (TRFDDDDHRRGPVKRGIDGRDREEPASKHKKRENGARDK) show a composition bias toward basic and acidic residues.

Interacts with DDX15. May interact with RUFY1. In terms of processing, phosphorylated.

It localises to the nucleus. Functionally, binds to the 3' poly(U) terminus of nascent RNA polymerase III transcripts, protecting them from exonuclease digestion and facilitating their folding and maturation. The chain is Lupus La protein homolog (Ssb) from Rattus norvegicus (Rat).